A 569-amino-acid chain; its full sequence is Glutamyl-tRNA reductase (569 aa).

Substrate contacts are provided by residues 49-52, Ser-109, 114-116, and Gln-120; these read TCNR and EGQ. The active-site Nucleophile is Cys-50. 192-197 contacts NADP(+); sequence GAGSMS. The segment at 284–397 is insert; sequence PVAVREETPA…VEAPRPAPAL (114 aa). Positions 546-569 are disordered; sequence AAVSRADDRDTSDSTENAKNRGRE. Over residues 550-569 the composition is skewed to basic and acidic residues; sequence RADDRDTSDSTENAKNRGRE.

The protein belongs to the glutamyl-tRNA reductase family. In terms of assembly, homodimer.

The catalysed reaction is (S)-4-amino-5-oxopentanoate + tRNA(Glu) + NADP(+) = L-glutamyl-tRNA(Glu) + NADPH + H(+). It functions in the pathway porphyrin-containing compound metabolism; protoporphyrin-IX biosynthesis; 5-aminolevulinate from L-glutamyl-tRNA(Glu): step 1/2. Its function is as follows. Catalyzes the NADPH-dependent reduction of glutamyl-tRNA(Glu) to glutamate 1-semialdehyde (GSA). The polypeptide is Glutamyl-tRNA reductase (Streptomyces avermitilis (strain ATCC 31267 / DSM 46492 / JCM 5070 / NBRC 14893 / NCIMB 12804 / NRRL 8165 / MA-4680)).